Here is a 478-residue protein sequence, read N- to C-terminus: Crt homolog 3 (478 aa).

Residues 1-30 (MGSDERKPLLSINDGDDDFNHQDVSTKTPP) are disordered. Residues 1-52 (MGSDERKPLLSINDGDDDFNHQDVSTKTPPIKKESLSNKFKSFLKKSMTKET) lie on the Cytoplasmic side of the membrane. The chain crosses the membrane as a helical span at residues 53–73 (LPILIYVLLYIISGVINVVLL). Residues 74–83 (KKLMIKFVNY) are Vacuolar-facing. The helical transmembrane segment at 84–104 (GFFLSQITNYGYLPIFLVAMW) threads the bilayer. Residues 105-124 (YKMYCTSDVPKETRNFPQYK) lie on the Cytoplasmic side of the membrane. Residues 125–145 (FVIMGLLDAINGFFVVIGGVS) traverse the membrane as a helical segment. The Vacuolar segment spans residues 146–149 (TSGP). Residues 150–170 (LQQLLNQAIIPFTMIASFIFL) traverse the membrane as a helical segment. The Cytoplasmic portion of the chain corresponds to 171–178 (RERYSLFQ). The chain crosses the membrane as a helical span at residues 179 to 199 (LGGAAVILGGVIVSLIPSLVG). The Vacuolar portion of the chain corresponds to 200 to 205 (GSSGGN). A helical transmembrane segment spans residues 206–226 (ILFYNFFYLISVIPGALSNVY). Over 227–237 (KDIAFQSIDMD) the chain is Cytoplasmic. The chain crosses the membrane as a helical span at residues 238 to 258 (VWYLQFWDCLYQSLFGSILFP). Topologically, residues 259 to 322 (VNNWLPPPAT…FVCDDCHNTW (64 aa)) are vacuolar. An N-linked (GlcNAc...) asparagine glycan is attached at N296. The chain crosses the membrane as a helical span at residues 323–343 (IIVLIYMTVNIAYNIFILLVL). Residues 344–352 (KHAGATVYS) lie on the Cytoplasmic side of the membrane. Residues 353–373 (IANTVILPLTNIFFSIHFIMG) traverse the membrane as a helical segment. Residues 374 to 376 (AAT) lie on the Vacuolar side of the membrane. The chain crosses the membrane as a helical span at residues 377 to 397 (TPFSALSVAGLLLILFGLGGY). At 398–478 (RIGSMIKKPP…RYRATNIINN (81 aa)) the chain is on the cytoplasmic side. Residues 404–446 (KKPPPDSKKDSEQQGGEGGAGDGDSSDNKNNLGDSAEIPQQIQ) form a disordered region. Basic and acidic residues predominate over residues 406–415 (PPPDSKKDSE).

This sequence belongs to the CRT-like transporter family.

It is found in the vacuole membrane. In terms of biological role, nutrient transporter. Involved in maintaining the osmotic homeostasis of the digestive vacuole. The chain is Crt homolog 3 (crtp3) from Dictyostelium discoideum (Social amoeba).